Reading from the N-terminus, the 369-residue chain is Cytokine receptor common subunit gamma (369 aa).

The N-terminal stretch at Met-1–Gly-22 is a signal peptide. Over Trp-23–Ala-263 the chain is Extracellular. A disulfide bridge connects residues Cys-62 and Cys-72. Asn-71, Asn-75, Asn-84, and Asn-96 each carry an N-linked (GlcNAc...) asparagine glycan. The cysteines at positions 102 and 115 are disulfide-linked. Positions Ala-156–Glu-254 constitute a Fibronectin type-III domain. N-linked (GlcNAc...) asparagine glycans are attached at residues Asn-159 and Asn-164. Residues Trp-238–Ser-242 carry the WSXWS motif motif. The chain crosses the membrane as a helical span at residues Val-264–Leu-284. The Cytoplasmic portion of the chain corresponds to Glu-285–Ala-369. The Box 1 motif motif lies at Arg-286–Lys-294.

Belongs to the type I cytokine receptor family. Type 5 subfamily. In terms of assembly, the gamma subunit is common to the IL2, IL4, IL7, IL15, IL21 and probably also the IL13 receptors. Interacts with SHB upon interleukin stimulation. Interacts with IL9.

Its subcellular location is the cell membrane. It is found in the cell surface. Functionally, common subunit for the receptors for a variety of interleukins. Probably in association with IL15RA, involved in the stimulation of neutrophil phagocytosis by IL15. This is Cytokine receptor common subunit gamma (Il2rg) from Mus musculus (Mouse).